The following is a 34-amino-acid chain: DDIT3 upstream open reading frame protein (34 aa).

Interacts with DDIT3 (isoform 1).

The protein resides in the nucleus. Its subcellular location is the cytoplasm. Its function is as follows. Product of the upstream open reading frame (uORF) of DDIT3/CHOP that is specifically produced in absence of stress, thereby preventing translation of downstream stress effector DDIT3/CHOP. The polypeptide is DDIT3 upstream open reading frame protein (Mus musculus (Mouse)).